A 590-amino-acid polypeptide reads, in one-letter code: V-type ATP synthase alpha chain (590 aa).

ATP is bound at residue 231-238 (GPFGSGKT).

The protein belongs to the ATPase alpha/beta chains family.

It carries out the reaction ATP + H2O + 4 H(+)(in) = ADP + phosphate + 5 H(+)(out). Its function is as follows. Produces ATP from ADP in the presence of a proton gradient across the membrane. The V-type alpha chain is a catalytic subunit. This Clostridium botulinum (strain ATCC 19397 / Type A) protein is V-type ATP synthase alpha chain.